Consider the following 341-residue polypeptide: Biotin synthase (341 aa).

In terms of domain architecture, Radical SAM core spans 40-267 (AEIQVSTLLS…RSMVRLSAGR (228 aa)). [4Fe-4S] cluster contacts are provided by Cys-55, Cys-59, and Cys-62. The [2Fe-2S] cluster site is built by Cys-99, Cys-130, Cys-190, and Arg-262.

Belongs to the radical SAM superfamily. Biotin synthase family. Homodimer. [4Fe-4S] cluster is required as a cofactor. Requires [2Fe-2S] cluster as cofactor.

The enzyme catalyses (4R,5S)-dethiobiotin + (sulfur carrier)-SH + 2 reduced [2Fe-2S]-[ferredoxin] + 2 S-adenosyl-L-methionine = (sulfur carrier)-H + biotin + 2 5'-deoxyadenosine + 2 L-methionine + 2 oxidized [2Fe-2S]-[ferredoxin]. Its pathway is cofactor biosynthesis; biotin biosynthesis; biotin from 7,8-diaminononanoate: step 2/2. Functionally, catalyzes the conversion of dethiobiotin (DTB) to biotin by the insertion of a sulfur atom into dethiobiotin via a radical-based mechanism. This Xylella fastidiosa (strain M12) protein is Biotin synthase.